Here is a 175-residue protein sequence, read N- to C-terminus: Receptor activity-modifying protein 2 (175 aa).

An N-terminal signal peptide occupies residues 1-42 (MASLRVERAGGPRLPRTRVGRPAALRLLLLLGAVLNPHEALA). Residues 43–143 (QPLPTTGTPG…VQPTFSDPPE (101 aa)) lie on the Extracellular side of the membrane. Cystine bridges form between C68/C99 and C84/C131. A glycan (N-linked (GlcNAc...) asparagine) is linked at N130. The chain crosses the membrane as a helical span at residues 144–165 (DVLLAMIIAPICLIPFLITLVV). Residues 166 to 175 (WRSKDSEAQA) lie on the Cytoplasmic side of the membrane.

It belongs to the RAMP family. In terms of assembly, heterodimer of CALCRL and RAMP2; the interaction forms the receptor complex for adrenomedullin/ADM. Heterodimer of CALCR and RAMP2; interaction forms the AMYR2 receptor complex for calcitonin/CALC and amylin/IAPP. In terms of tissue distribution, strongly expressed in lung, breast, immune system and fetal tissues.

It localises to the cell membrane. Functionally, accessory protein that interacts with and modulates the function of G-protein coupled receptors including calcitonin gene-related peptide type 1 receptor (CALCRL) and calcitonin receptor (CALCR). Required for the transport of CALCRL to the plasma membrane. Together with CALCRL, form a receptor complex for adrenomedullin/ADM. Together with CALCR, act as a receptor complex for calcitonin/CT/CALC. Together with CALCR, also act as a receptor complex for amylin/IAPP. The polypeptide is Receptor activity-modifying protein 2 (Homo sapiens (Human)).